We begin with the raw amino-acid sequence, 709 residues long: Ribosomal RNA large subunit methyltransferase K/L (709 aa).

The THUMP domain maps to leucine 43 to phenylalanine 154.

The protein belongs to the methyltransferase superfamily. RlmKL family.

Its subcellular location is the cytoplasm. It catalyses the reaction guanosine(2445) in 23S rRNA + S-adenosyl-L-methionine = N(2)-methylguanosine(2445) in 23S rRNA + S-adenosyl-L-homocysteine + H(+). The catalysed reaction is guanosine(2069) in 23S rRNA + S-adenosyl-L-methionine = N(2)-methylguanosine(2069) in 23S rRNA + S-adenosyl-L-homocysteine + H(+). In terms of biological role, specifically methylates the guanine in position 2445 (m2G2445) and the guanine in position 2069 (m7G2069) of 23S rRNA. The chain is Ribosomal RNA large subunit methyltransferase K/L from Shewanella baltica (strain OS195).